The following is a 663-amino-acid chain: DNA topoisomerase 1 (663 aa).

Residues 4–137 (SWLIITEKDN…TVKVDRVRYS (134 aa)) enclose the Toprim domain. Mg(2+) contacts are provided by glutamate 10 and aspartate 106. Residues 155-558 (DFNLANAALA…ESREMLLQIL (404 aa)) form the Topo IA-type catalytic domain. The segment at 193 to 198 (SVGRVQ) is interaction with DNA. Residue tyrosine 306 is the O-(5'-phospho-DNA)-tyrosine intermediate of the active site. The segment at 583-610 (CPECGGELVVRQSKAGKRFIGCSNYPDC) adopts a C4-type 1 zinc-finger fold. The segment at 629-653 (CKEHEIKEVKIRTKKGYWNLGCPYC) adopts a C4-type 2; atypical zinc-finger fold.

The protein belongs to the type IA topoisomerase family. As to quaternary structure, monomer. Mg(2+) serves as cofactor.

It catalyses the reaction ATP-independent breakage of single-stranded DNA, followed by passage and rejoining.. In terms of biological role, releases the supercoiling and torsional tension of DNA, which is introduced during the DNA replication and transcription, by transiently cleaving and rejoining one strand of the DNA duplex. Introduces a single-strand break via transesterification at a target site in duplex DNA. The scissile phosphodiester is attacked by the catalytic tyrosine of the enzyme, resulting in the formation of a DNA-(5'-phosphotyrosyl)-enzyme intermediate and the expulsion of a 3'-OH DNA strand. The free DNA strand then undergoes passage around the unbroken strand, thus removing DNA supercoils. Finally, in the religation step, the DNA 3'-OH attacks the covalent intermediate to expel the active-site tyrosine and restore the DNA phosphodiester backbone. The polypeptide is DNA topoisomerase 1 (Archaeoglobus fulgidus (strain ATCC 49558 / DSM 4304 / JCM 9628 / NBRC 100126 / VC-16)).